The following is a 770-amino-acid chain: Proton-coupled zinc antiporter SLC30A5 (770 aa).

At 1-29 (MEEKYSSQALAGGGVLGPVDVPSARLTRY) the chain is on the cytoplasmic side. Residues 30–50 (IVLLCFAKFLKAVGLFESYDL) form a helical membrane-spanning segment. The Lumenal segment spans residues 51–53 (LKA). Residues 54-74 (VHLVQFIFIVKLGSAFFMVLF) traverse the membrane as a helical segment. Topologically, residues 75–95 (QKPFSSGKVVTKHQWIKIFKH) are cytoplasmic. A helical membrane pass occupies residues 96–116 (AVVGCIISLLWFFGLTLCGPL). A topological domain (lumenal) is located at residue arginine 117. A helical transmembrane segment spans residues 118–138 (TLLLFEHSDVVVLSLLSVLFT). The Cytoplasmic segment spans residues 139 to 149 (SSGGGPAKTRG). A helical transmembrane segment spans residues 150–170 (AAFFIIAVICLLLFDNDDLMA). Topologically, residues 171 to 190 (KIAEHPEGHHDSALTHVLYT) are lumenal. A helical membrane pass occupies residues 191-211 (VIAFLGVADHKGGVLLLVLAL). The Cytoplasmic segment spans residues 212–235 (CCKVGFHMASRKLSVDVGGAKRLQ). A helical membrane pass occupies residues 236–256 (ALSHLVSVLLLCPWVIVLSLT). At 257–264 (TESKVESW) the chain is on the lumenal side. A helical transmembrane segment spans residues 265–285 (SSLIMPFITVIFFVVILDFYV). Residues 286-300 (ESICSVKMESSKCAR) are Cytoplasmic-facing. Residues 301-321 (YGSFLIFISALLFGNFWTHPI) form a helical membrane-spanning segment. Topologically, residues 322-339 (TDQLRAMNKPAHHESTEH) are lumenal. A helical membrane pass occupies residues 340 to 360 (VLSGGVVVSAVFFILSANILS). Residues 361 to 415 (SPSRKGQKGTLIGYSPEGTPLYNFMGDAIQQSSQSLPRFIKESLKQILEEYDSRQ) are Cytoplasmic-facing. Residues 416-436 (IFYFLCLNLAFTFVELFYGVW) form a helical membrane-spanning segment. The Lumenal portion of the chain corresponds to 437–445 (TNSLGLISD). Residues 446–466 (GFHMLFDCSALVMGLFAALMT) form a helical membrane-spanning segment. The Zn(2+) site is built by histidine 448 and aspartate 452. Residues 467 to 480 (RWKATRIFSYGYGR) are Cytoplasmic-facing. The chain crosses the membrane as a helical span at residues 481 to 501 (VEILSGFINGLFLMVIAFFVF). Topologically, residues 502–517 (MESVARLVDPPDIDTN) are lumenal. A helical membrane pass occupies residues 518 to 538 (MLTPVSVGGLIVNLVGICAFS). The tract at residues 539–579 (HAHSHGASRGGCHSHEHSHSYHGHSHSHGHGHSHNDHGHSH) is his-rich loop; required for zinc transport. Residues 539 to 597 (HAHSHGASRGGCHSHEHSHSYHGHSHSHGHGHSHNDHGHSHGHSHVSSGGGMNTNMRGV) are Cytoplasmic-facing. A disordered region spans residues 548–586 (GGCHSHEHSHSYHGHSHSHGHGHSHNDHGHSHGHSHVSS). Positions 558-570 (SYHGHSHSHGHGH) are enriched in basic residues. A helical transmembrane segment spans residues 598-618 (FLHVLADTLGSVGVIVSTTFI). Zn(2+)-binding residues include histidine 600 and aspartate 604. Residues 619-622 (QQFG) are Lumenal-facing. A helical membrane pass occupies residues 623 to 643 (WLIADPLCSLFIATLIFLSVI). Over 644 to 770 (PLLKDACQVL…KYYKDGTYIM (127 aa)) the chain is Cytoplasmic.

It belongs to the cation diffusion facilitator (CDF) transporter (TC 2.A.4) family. SLC30A subfamily. As to quaternary structure, heterodimer with SLC30A6/ZNT6; form a functional zinc ion transmembrane transporter.

Its subcellular location is the golgi apparatus. The protein localises to the golgi stack membrane. It localises to the cytoplasmic vesicle. It is found in the COPII-coated vesicle membrane. The protein resides in the secretory vesicle membrane. Its subcellular location is the trans-Golgi network membrane. It carries out the reaction Zn(2+)(in) + 2 H(+)(out) = Zn(2+)(out) + 2 H(+)(in). Functionally, together with SLC30A6 forms a functional proton-coupled zinc ion antiporter mediating zinc entry into the lumen of organelles along the secretory pathway. By contributing to zinc ion homeostasis within the early secretory pathway, regulates the activation and folding of enzymes like alkaline phosphatases and enzymes involved in phosphatidylinositol glycan anchor biosynthesis. This Gallus gallus (Chicken) protein is Proton-coupled zinc antiporter SLC30A5.